A 261-amino-acid chain; its full sequence is (S)-ureidoglycine aminohydrolase (261 aa).

The Cupin type-2 domain maps to 184–230 (LSFAPGASHGYIETHVQEHGAYILSGQGVYNLDNNWIPVKKGDYIFM). E196, H198, H202, and Q236 together coordinate Mn(2+). Residue E196 coordinates substrate. Residues Q236, Y249, and K253 each contribute to the substrate site.

This sequence belongs to the UGHY family. As to quaternary structure, monomer. Mn(2+) is required as a cofactor.

The protein localises to the cytoplasm. It catalyses the reaction (S)-2-ureidoglycine + H2O = (S)-ureidoglycolate + NH4(+). Its function is as follows. Involved in the anaerobic nitrogen utilization via the assimilation of allantoin. Catalyzes the second stereospecific hydrolysis reaction (deamination) of the allantoin degradation pathway, producing S-ureidoglycolate and ammonia from S-ureidoglycine. This Escherichia coli (strain K12) protein is (S)-ureidoglycine aminohydrolase (allE).